A 162-amino-acid chain; its full sequence is G/U mismatch-specific DNA glycosylase (162 aa).

Belongs to the uracil-DNA glycosylase (UDG) superfamily. TDG/mug family. Binds DNA as a monomer.

It is found in the cytoplasm. It carries out the reaction Specifically hydrolyzes mismatched double-stranded DNA and polynucleotides, releasing free uracil.. Functionally, excises ethenocytosine and uracil, which can arise by alkylation or deamination of cytosine, respectively, from the corresponding mispairs with guanine in ds-DNA. It is capable of hydrolyzing the carbon-nitrogen bond between the sugar-phosphate backbone of the DNA and the mispaired base. The complementary strand guanine functions in substrate recognition. Required for DNA damage lesion repair in stationary-phase cells. This is G/U mismatch-specific DNA glycosylase from Serratia marcescens.